The sequence spans 176 residues: Large ribosomal subunit protein uL10 (176 aa).

The protein belongs to the universal ribosomal protein uL10 family. Part of the ribosomal stalk of the 50S ribosomal subunit. The N-terminus interacts with L11 and the large rRNA to form the base of the stalk. The C-terminus forms an elongated spine to which L12 dimers bind in a sequential fashion forming a multimeric L10(L12)X complex.

Functionally, forms part of the ribosomal stalk, playing a central role in the interaction of the ribosome with GTP-bound translation factors. This chain is Large ribosomal subunit protein uL10, found in Alcanivorax borkumensis (strain ATCC 700651 / DSM 11573 / NCIMB 13689 / SK2).